Reading from the N-terminus, the 397-residue chain is MERFKKASSIIEMLKQHGHEAYFVGGSVRDLIIDRPIGDIDIATSALPEEVMAIFPRHVPVGLEHGTVIVVENGEPYEVTTFRTESEYEDFRRPSSVQFVRSLEEDLKRRDFTMNAIAMTEEGEMVDLFAGKEAIRLKEITTVGDAADRFQEDALRMMRGIRFVSTLGFSLEIKTKQAIETYGHLLEHIAIERITVEFEKLLTGTYCVNGLQELVETKLFSHLPYLQMSEERLLKATQYKWDSFETDVEAWAFFLYCIGEEHPSVFLRQWKFSNKKIKDIVAVLLAIRSRKEKEWDTILLYKTGIRIAEMAERVYEAIIESYNSASVKQVQSLFHALPIKNRQEMNVTGNDLLSWTDKKPGPWVAEMLQNIEEAIVQGDLVNKKEDIREWLQRCNLL.

2 residues coordinate ATP: Gly26 and Arg29. 2 residues coordinate CTP: Gly26 and Arg29. 2 residues coordinate Mg(2+): Asp39 and Asp41. Residues Arg110, Asp153, Arg156, Arg159, and Arg162 each contribute to the ATP site. CTP contacts are provided by Arg110, Asp153, Arg156, Arg159, and Arg162.

This sequence belongs to the tRNA nucleotidyltransferase/poly(A) polymerase family. Bacterial CCA-adding enzyme type 3 subfamily. Homodimer. The cofactor is Mg(2+).

It catalyses the reaction a tRNA precursor + 2 CTP + ATP = a tRNA with a 3' CCA end + 3 diphosphate. The catalysed reaction is a tRNA with a 3' CCA end + 2 CTP + ATP = a tRNA with a 3' CCACCA end + 3 diphosphate. Catalyzes the addition and repair of the essential 3'-terminal CCA sequence in tRNAs without using a nucleic acid template. Adds these three nucleotides in the order of C, C, and A to the tRNA nucleotide-73, using CTP and ATP as substrates and producing inorganic pyrophosphate. tRNA 3'-terminal CCA addition is required both for tRNA processing and repair. Also involved in tRNA surveillance by mediating tandem CCA addition to generate a CCACCA at the 3' terminus of unstable tRNAs. While stable tRNAs receive only 3'-terminal CCA, unstable tRNAs are marked with CCACCA and rapidly degraded. The polypeptide is CCA-adding enzyme (Bacillus mycoides (strain KBAB4) (Bacillus weihenstephanensis)).